The following is a 116-amino-acid chain: Large ribosomal subunit protein bL20 (116 aa).

This sequence belongs to the bacterial ribosomal protein bL20 family.

Its function is as follows. Binds directly to 23S ribosomal RNA and is necessary for the in vitro assembly process of the 50S ribosomal subunit. It is not involved in the protein synthesizing functions of that subunit. This is Large ribosomal subunit protein bL20 from Acaryochloris marina (strain MBIC 11017).